Reading from the N-terminus, the 379-residue chain is 3-isopropylmalate dehydrogenase 1 (379 aa).

Substrate-binding residues include Arg101, Arg111, Arg139, and Asp230. Residues Asp230, Asp254, and Asp258 each contribute to the Mg(2+) site. 293–305 provides a ligand contact to NAD(+); that stretch reads GSAPDIAGKGIAN.

The protein belongs to the isocitrate and isopropylmalate dehydrogenases family. LeuB type 1 subfamily. As to quaternary structure, homodimer. Mg(2+) serves as cofactor. Mn(2+) is required as a cofactor.

The protein resides in the cytoplasm. It carries out the reaction (2R,3S)-3-isopropylmalate + NAD(+) = 4-methyl-2-oxopentanoate + CO2 + NADH. Its pathway is amino-acid biosynthesis; L-leucine biosynthesis; L-leucine from 3-methyl-2-oxobutanoate: step 3/4. Catalyzes the oxidation of 3-carboxy-2-hydroxy-4-methylpentanoate (3-isopropylmalate) to 3-carboxy-4-methyl-2-oxopentanoate. The product decarboxylates to 4-methyl-2 oxopentanoate. The chain is 3-isopropylmalate dehydrogenase 1 from Bradyrhizobium diazoefficiens (strain JCM 10833 / BCRC 13528 / IAM 13628 / NBRC 14792 / USDA 110).